The sequence spans 131 residues: Holo-[acyl-carrier-protein] synthase (131 aa).

The Mg(2+) site is built by Asp-8 and Glu-63.

The protein belongs to the P-Pant transferase superfamily. AcpS family. Mg(2+) is required as a cofactor.

Its subcellular location is the cytoplasm. The catalysed reaction is apo-[ACP] + CoA = holo-[ACP] + adenosine 3',5'-bisphosphate + H(+). Transfers the 4'-phosphopantetheine moiety from coenzyme A to a Ser of acyl-carrier-protein. The sequence is that of Holo-[acyl-carrier-protein] synthase from Shewanella pealeana (strain ATCC 700345 / ANG-SQ1).